The sequence spans 902 residues: Gamma-tubulin complex component 2 (902 aa).

Y83 bears the Phosphotyrosine mark. Residues 874–902 (AERSQKATPQVPVLRGPPAPAPRVAVTAQ) are disordered.

The protein belongs to the TUBGCP family. In terms of assembly, component of the gamma-tubulin ring complex (gTuRC) consisting of TUBGCP2, TUBGCP3, TUBGCP4, TUBGCP5 and TUBGCP6 and gamma-tubulin TUBG1 or TUBG2. TUBGCP2, TUBGCP3, TUBGCP4, TUBGCP5 and TUBGCP6 assemble in a 5:5:2:1:1 stoichiometry; each is associated with a gamma-tubulin, thereby arranging 14 gamma-tubulins in a helical manner. Gamma-tubulin at the first position is blocked by TUBGCP3 at the last position, allowing 13 protafilaments to grow into a microtubule. The gTuRC (via TUBGCP3 and TUBGCP6) interacts with ACTB and MZT1; the interactions form a luminal bridge that stabilizes the initial structure during complex assembly. The gTuRC (via TUBGCP2) interacts with MZT2A/MZT2B and CDK5RAP2 (via CM1 motif); the interactions play a role in gTuRC activation. Interacts with ATF5; the ATF5:PCNT:polyglutamylated tubulin (PGT) tripartite unites the mother centriole and the pericentriolar material (PCM) in the centrosome. As to expression, ubiquitously expressed.

It localises to the cytoplasm. The protein localises to the cytoskeleton. It is found in the microtubule organizing center. Its subcellular location is the centrosome. Component of the gamma-tubulin ring complex (gTuRC) which mediates microtubule nucleation. The gTuRC regulates the minus-end nucleation of alpha-beta tubulin heterodimers that grow into microtubule protafilaments, a critical step in centrosome duplication and spindle formation. Plays a role in neuronal migration. The sequence is that of Gamma-tubulin complex component 2 (TUBGCP2) from Homo sapiens (Human).